The chain runs to 373 residues: Peroxisomal biogenesis factor 3 (373 aa).

Residues 1–15 (MLRSVWNFLKRHKKK) lie on the Cytoplasmic side of the membrane. The targeting to peroxisomes stretch occupies residues 1-45 (MLRSVWNFLKRHKKKCIFLGTVLGGVYILGKYGQKKIREIQEREA). Residues 16–36 (CIFLGTVLGGVYILGKYGQKK) traverse the membrane as a helical segment. Residues 37–116 (IREIQEREAA…LKIISFTRST (80 aa)) are Peroxisomal-facing. The helical transmembrane segment at 117–140 (VAVYSTCMLVVLLRVQLNIIGGYI) threads the bilayer. The interval 120–136 (YSTCMLVVLLRVQLNII) is interaction with PEX19. Residues 141–373 (YLDNAAVGKN…AFSTPQQLEK (233 aa)) are Cytoplasmic-facing.

The protein belongs to the peroxin-3 family. In terms of assembly, interacts with PEX19. Found in all examined tissues.

The protein resides in the peroxisome membrane. Its function is as follows. Involved in peroxisome biosynthesis and integrity. Assembles membrane vesicles before the matrix proteins are translocated. As a docking factor for PEX19, is necessary for the import of peroxisomal membrane proteins in the peroxisomes. This Homo sapiens (Human) protein is Peroxisomal biogenesis factor 3 (PEX3).